Here is an 834-residue protein sequence, read N- to C-terminus: Taste receptor type 1 member 2 (834 aa).

The N-terminal stretch at 1–19 (MEPRVRTVCFLFFLLRVLA) is a signal peptide. Over 20 to 561 (EPAKNSDFYL…SFLEWHEAAT (542 aa)) the chain is Extracellular. 7 N-linked (GlcNAc...) asparagine glycosylation sites follow: Asn-84, Asn-292, Asn-312, Asn-363, Asn-423, Asn-482, and Asn-522. Residues 562-582 (IAVALLAALGFLSTLAILVIF) traverse the membrane as a helical segment. Over 583–597 (WRHFETPMVRSAGGP) the chain is Cytoplasmic. A helical transmembrane segment spans residues 598–618 (MCFLMLTLLLVAYMVVPVYVG). Topologically, residues 619 to 630 (LPKVSTCLCRQA) are extracellular. The helical transmembrane segment at 631 to 651 (LFPVCFTICISCIAVRSFQIV) threads the bilayer. At 652–676 (CVFKMASRFPRAYSYWVRYQGSYVS) the chain is on the cytoplasmic side. A helical transmembrane segment spans residues 677–697 (VAFITALKMVTVVISLLATGL). The Extracellular portion of the chain corresponds to 698 to 722 (NPTTRTDTDDPKIMIISCNPNYRNS). A helical transmembrane segment spans residues 723 to 743 (LLFNTSLDLLLSVAGFSFAYM). The Cytoplasmic portion of the chain corresponds to 744-755 (GKELPTNYNEAK). Residues 756–776 (FITFSMTFYFTSSVSLCTFMS) traverse the membrane as a helical segment. At 777–779 (VYD) the chain is on the extracellular side. A helical transmembrane segment spans residues 780 to 800 (GVLVTIVDLLVTVFNLLAISL). Over 801-834 (GYFGPKCYMILFYPERNTPAYFNSMIQGYTMRRD) the chain is Cytoplasmic.

It belongs to the G-protein coupled receptor 3 family. TAS1R subfamily. As to quaternary structure, forms heterodimers with TAS1R3.

Its subcellular location is the cell membrane. Putative taste receptor. TAS1R2/TAS1R3 recognizes diverse natural and synthetic sweeteners. This Saimiri sciureus (Common squirrel monkey) protein is Taste receptor type 1 member 2 (TAS1R2).